The following is a 72-amino-acid chain: MAKEDCIEMQGTILETLPNTMFRVELENGHIVAAHISGKMRKNYIRILTGDKVTVEMTPYDLSKARIIFRAR.

Residues 1-72 enclose the S1-like domain; it reads MAKEDCIEMQ…SKARIIFRAR (72 aa).

The protein belongs to the IF-1 family. As to quaternary structure, component of the 30S ribosomal translation pre-initiation complex which assembles on the 30S ribosome in the order IF-2 and IF-3, IF-1 and N-formylmethionyl-tRNA(fMet); mRNA recruitment can occur at any time during PIC assembly.

It localises to the cytoplasm. Its function is as follows. One of the essential components for the initiation of protein synthesis. Stabilizes the binding of IF-2 and IF-3 on the 30S subunit to which N-formylmethionyl-tRNA(fMet) subsequently binds. Helps modulate mRNA selection, yielding the 30S pre-initiation complex (PIC). Upon addition of the 50S ribosomal subunit IF-1, IF-2 and IF-3 are released leaving the mature 70S translation initiation complex. The polypeptide is Translation initiation factor IF-1 (Haemophilus ducreyi (strain 35000HP / ATCC 700724)).